The primary structure comprises 1150 residues: BAI1-associated protein 3 (1150 aa).

The disordered stretch occupies residues 22–44 (RRKTEQEPEVTNSQEPPTGAWKP). In terms of domain architecture, C2 1 spans 139 to 298 (SSEEHMEAIM…VKSARANGTA (160 aa)). 2 residues coordinate Ca(2+): Asp174 and Asp180. The tract at residues 193-214 (APQEPSGQKEQRFGFRKGSKRS) is disordered. The Ca(2+) site is built by Asp258 and Asp260. The MHD1 domain occupies 626 to 747 (FELYLTLADT…EASLFYTELL (122 aa)). The MHD2 domain maps to 851-959 (DEAVAPLLKY…CSTRECIEQF (109 aa)). Residues 973-1099 (RFGRLTVRCH…GIARPHVGGG (127 aa)) form the C2 2 domain. The Ca(2+) site is built by Leu1003, Asp1004, Asp1010, Asp1068, Asp1070, Ser1073, and Asp1076.

This sequence belongs to the unc-13 family. As to quaternary structure, interacts with ADGRB1, this interaction is direct. Interacts with endosomal SNARE proteins VAMP3, VAMP4, STX6 and STX16; this interaction is increased in the presence of calcium. Requires Ca(2+) as cofactor. As to expression, prominently expressed in brain structures including hypothalamus, amygdala, stria terminalis and periaqueductal gray (at protein level). Expressed in nonneuronal tissues, including placenta, lung, pancreas, spleen, and testes. Within placenta, expression is restricted to the syncytiotrophoblasts.

The protein resides in the cytoplasm. It is found in the cytosol. It localises to the recycling endosome membrane. The protein localises to the late endosome membrane. Its subcellular location is the golgi apparatus. The protein resides in the trans-Golgi network membrane. It is found in the cell membrane. Its function is as follows. Functions in endosome to Golgi retrograde transport. In response to calcium influx, may interact with SNARE fusion receptors and membrane phospholipids to mediate endosome fusion with the trans-Golgi network. By promoting the recycling of secretory vesicle transmembrane proteins, it indirectly controls dense-core secretory vesicle biogenesis, maturation and their ability to mediate the constitutive and regulated secretion of neurotransmitters and hormones. May regulate behavior and food intake by controlling calcium-stimulated exocytosis of neurotransmitters including NPY and serotonin and hormones like insulin. Proposed to play a role in hypothalamic neuronal firing by modulating gamma-aminobutyric acid (GABA)ergic inhibitory neurotransmission. The chain is BAI1-associated protein 3 from Mus musculus (Mouse).